We begin with the raw amino-acid sequence, 208 residues long: Large ribosomal subunit protein uL4 (208 aa).

A disordered region spans residues 44 to 76 (RRQGTQSTKTKSEVRGGGRKPWRQKGTGRARHG). Residues 60–76 (GGRKPWRQKGTGRARHG) are compositionally biased toward basic residues.

It belongs to the universal ribosomal protein uL4 family. Part of the 50S ribosomal subunit.

Its function is as follows. One of the primary rRNA binding proteins, this protein initially binds near the 5'-end of the 23S rRNA. It is important during the early stages of 50S assembly. It makes multiple contacts with different domains of the 23S rRNA in the assembled 50S subunit and ribosome. In terms of biological role, forms part of the polypeptide exit tunnel. This Acetivibrio thermocellus (strain ATCC 27405 / DSM 1237 / JCM 9322 / NBRC 103400 / NCIMB 10682 / NRRL B-4536 / VPI 7372) (Clostridium thermocellum) protein is Large ribosomal subunit protein uL4.